We begin with the raw amino-acid sequence, 195 residues long: Dephospho-CoA kinase (195 aa).

The DPCK domain maps to 2-195; it reads IIGLTGGIGV…DIVDSLSLSS (194 aa). 10-15 is an ATP binding site; the sequence is GVGKSF.

This sequence belongs to the CoaE family.

It is found in the cytoplasm. It carries out the reaction 3'-dephospho-CoA + ATP = ADP + CoA + H(+). Its pathway is cofactor biosynthesis; coenzyme A biosynthesis; CoA from (R)-pantothenate: step 5/5. In terms of biological role, catalyzes the phosphorylation of the 3'-hydroxyl group of dephosphocoenzyme A to form coenzyme A. This chain is Dephospho-CoA kinase, found in Wolbachia sp. subsp. Brugia malayi (strain TRS).